Here is a 268-residue protein sequence, read N- to C-terminus: Lipase (268 aa).

The N-terminal stretch at 1–34 (MRLSRRAATASALLLTPALALFGASAAVSAPRIQ) is a signal peptide. Residue serine 44 is the Nucleophile of the active site. Intrachain disulfides connect cysteine 61-cysteine 86, cysteine 127-cysteine 135, and cysteine 185-cysteine 232. Histidine 250 is an active-site residue.

Monomer.

Its subcellular location is the secreted. It carries out the reaction a triacylglycerol + H2O = a diacylglycerol + a fatty acid + H(+). The catalysed reaction is hexadecanoyl-CoA + H2O = hexadecanoate + CoA + H(+). Inhibited by 3,4-dichloroisocoumarin and tetrahydrolipstatin in the absence of substrate, but by phenylmethylsulfonyl fluoride (PMSF) only in the presence of substrate. Several water-miscible solvents enhance the lipase hydrolytic activity in vitro. Tetrahydrofuran and N,N-dimethylformamide (both 50%) inactivate the enzyme with t1/2 of 5 minutes and t1/2 of 2 hours, respectively. Its function is as follows. Catalyzes the hydrolysis of p-nitrophenyl esters, alpha- and beta-naphthyl esters, and triacylglycerols, with a preference for medium acyl chain length (C8-C12). Shows a much higher hydrolysis rate of glycerol esters of unsaturated C16 and C18 fatty acids than that of their saturated counterparts, and a preference for cis double bond. Is also able to hydrolyze several natural oils and Tween detergents. Also displays thioesterase and phospholipase activities, towards palmitoyl-coenzyme A and diheptanoyl glycerophosphocholine, respectively. Shows transesterification activity of racemic 1-phenyl ethanol with vinyl acetate in hexane, proceeding with partial (R)-enantioselectivity. This Streptomyces rimosus protein is Lipase.